A 304-amino-acid polypeptide reads, in one-letter code: Non-specific ribonucleoside hydrolase RihC (304 aa).

His-233 is a catalytic residue.

The protein belongs to the IUNH family. RihC subfamily.

In terms of biological role, hydrolyzes both purine and pyrimidine ribonucleosides with a broad-substrate specificity. The chain is Non-specific ribonucleoside hydrolase RihC from Escherichia coli O127:H6 (strain E2348/69 / EPEC).